The following is a 94-amino-acid chain: Aspartyl/glutamyl-tRNA(Asn/Gln) amidotransferase subunit C (94 aa).

This sequence belongs to the GatC family. In terms of assembly, heterotrimer of A, B and C subunits.

It carries out the reaction L-glutamyl-tRNA(Gln) + L-glutamine + ATP + H2O = L-glutaminyl-tRNA(Gln) + L-glutamate + ADP + phosphate + H(+). It catalyses the reaction L-aspartyl-tRNA(Asn) + L-glutamine + ATP + H2O = L-asparaginyl-tRNA(Asn) + L-glutamate + ADP + phosphate + 2 H(+). Functionally, allows the formation of correctly charged Asn-tRNA(Asn) or Gln-tRNA(Gln) through the transamidation of misacylated Asp-tRNA(Asn) or Glu-tRNA(Gln) in organisms which lack either or both of asparaginyl-tRNA or glutaminyl-tRNA synthetases. The reaction takes place in the presence of glutamine and ATP through an activated phospho-Asp-tRNA(Asn) or phospho-Glu-tRNA(Gln). This chain is Aspartyl/glutamyl-tRNA(Asn/Gln) amidotransferase subunit C, found in Campylobacter jejuni subsp. jejuni serotype O:6 (strain 81116 / NCTC 11828).